A 257-amino-acid polypeptide reads, in one-letter code: Diphthine synthase (257 aa).

Residues isoleucine 11, aspartate 89, isoleucine 92, serine 117–valine 118, leucine 169, leucine 210, and histidine 235 each bind S-adenosyl-L-methionine.

The protein belongs to the diphthine synthase family. Homodimer.

It catalyses the reaction 2-[(3S)-amino-3-carboxypropyl]-L-histidyl-[translation elongation factor 2] + 3 S-adenosyl-L-methionine = diphthine-[translation elongation factor 2] + 3 S-adenosyl-L-homocysteine + 3 H(+). It participates in protein modification; peptidyl-diphthamide biosynthesis. S-adenosyl-L-methionine-dependent methyltransferase that catalyzes the trimethylation of the amino group of the modified target histidine residue in translation elongation factor 2 (EF-2), to form an intermediate called diphthine. The three successive methylation reactions represent the second step of diphthamide biosynthesis. The protein is Diphthine synthase of Saccharolobus islandicus (strain L.S.2.15 / Lassen #1) (Sulfolobus islandicus).